Consider the following 85-residue polypeptide: Large ribosomal subunit protein eL34 (85 aa).

This sequence belongs to the eukaryotic ribosomal protein eL34 family.

This is Large ribosomal subunit protein eL34 from Saccharolobus islandicus (strain Y.N.15.51 / Yellowstone #2) (Sulfolobus islandicus).